Here is a 368-residue protein sequence, read N- to C-terminus: Alanine racemase (368 aa).

K40 (proton acceptor; specific for D-alanine) is an active-site residue. K40 is subject to N6-(pyridoxal phosphate)lysine. R134 lines the substrate pocket. The active-site Proton acceptor; specific for L-alanine is Y263. Substrate is bound at residue M310.

The protein belongs to the alanine racemase family. Pyridoxal 5'-phosphate serves as cofactor.

It carries out the reaction L-alanine = D-alanine. Its pathway is amino-acid biosynthesis; D-alanine biosynthesis; D-alanine from L-alanine: step 1/1. Catalyzes the interconversion of L-alanine and D-alanine. May also act on other amino acids. The sequence is that of Alanine racemase (alr) from Listeria monocytogenes serotype 4b (strain F2365).